The chain runs to 209 residues: Large ribosomal subunit protein uL3 (209 aa).

Residues 128 to 154 (QQRGPMTHGSKFHRAPGSMGASSDPSR) are disordered.

Belongs to the universal ribosomal protein uL3 family. In terms of assembly, part of the 50S ribosomal subunit. Forms a cluster with proteins L14 and L19.

One of the primary rRNA binding proteins, it binds directly near the 3'-end of the 23S rRNA, where it nucleates assembly of the 50S subunit. The sequence is that of Large ribosomal subunit protein uL3 from Clostridium beijerinckii (strain ATCC 51743 / NCIMB 8052) (Clostridium acetobutylicum).